The chain runs to 86 residues: Exodeoxyribonuclease 7 small subunit (86 aa).

The interval 67–86 is disordered; it reads LSDPAQPEASEPFDPPSHDG.

Belongs to the XseB family. As to quaternary structure, heterooligomer composed of large and small subunits.

Its subcellular location is the cytoplasm. It carries out the reaction Exonucleolytic cleavage in either 5'- to 3'- or 3'- to 5'-direction to yield nucleoside 5'-phosphates.. In terms of biological role, bidirectionally degrades single-stranded DNA into large acid-insoluble oligonucleotides, which are then degraded further into small acid-soluble oligonucleotides. The polypeptide is Exodeoxyribonuclease 7 small subunit (Stenotrophomonas maltophilia (strain K279a)).